The primary structure comprises 135 residues: Interleukin-4 (135 aa).

The first 24 residues, 1-24, serve as a signal peptide directing secretion; sequence MGLTYQLIPVLVCLLVCTSHFVHG. Disulfide bonds link C27/C135, C48/C85, and C70/C105. The N-linked (GlcNAc...) asparagine glycan is linked to N62.

The protein belongs to the IL-4/IL-13 family.

Its subcellular location is the secreted. Functionally, participates in at least several B-cell activation processes as well as of other cell types. It is a costimulator of DNA-synthesis. It induces the expression of class II MHC molecules on resting B-cells. It enhances both secretion and cell surface expression of IgE and IgG1. It also regulates the expression of the low affinity Fc receptor for IgE (CD23) on both lymphocytes and monocytes. Positively regulates IL31RA expression in macrophages. Stimulates autophagy in dendritic cells by interfering with mTORC1 signaling and through the induction of RUFY4. This Bubalus carabanensis (Swamp type water buffalo) protein is Interleukin-4 (IL4).